The sequence spans 644 residues: Ribonuclease R (644 aa).

Positions 211 to 529 constitute an RNB domain; it reads RINYSHIPFI…LHRLLKELLF (319 aa). The region spanning 573–644 is the S1 motif domain; the sequence is LELLEKEFLG…ITERIKEHVS (72 aa).

It belongs to the RNR ribonuclease family. RNase R subfamily.

Its subcellular location is the cytoplasm. It carries out the reaction Exonucleolytic cleavage in the 3'- to 5'-direction to yield nucleoside 5'-phosphates.. Its function is as follows. 3'-5' exoribonuclease that releases 5'-nucleoside monophosphates and is involved in maturation of structured RNAs. The chain is Ribonuclease R from Helicobacter pylori (strain ATCC 700392 / 26695) (Campylobacter pylori).